Consider the following 115-residue polypeptide: Nitrogenase-stabilizing/protective protein NifW (115 aa).

Belongs to the NifW family. As to quaternary structure, homotrimer; associates with NifD.

Its function is as follows. May protect the nitrogenase Fe-Mo protein from oxidative damage. This chain is Nitrogenase-stabilizing/protective protein NifW, found in Rhodopseudomonas palustris (strain BisB18).